Here is a 354-residue protein sequence, read N- to C-terminus: Uroporphyrinogen decarboxylase (354 aa).

Substrate is bound by residues 27–31 (RQAGR), D77, Y154, T209, and H327.

This sequence belongs to the uroporphyrinogen decarboxylase family. In terms of assembly, homodimer.

It localises to the cytoplasm. The enzyme catalyses uroporphyrinogen III + 4 H(+) = coproporphyrinogen III + 4 CO2. Its pathway is porphyrin-containing compound metabolism; protoporphyrin-IX biosynthesis; coproporphyrinogen-III from 5-aminolevulinate: step 4/4. In terms of biological role, catalyzes the decarboxylation of four acetate groups of uroporphyrinogen-III to yield coproporphyrinogen-III. The chain is Uroporphyrinogen decarboxylase from Histophilus somni (strain 2336) (Haemophilus somnus).